Reading from the N-terminus, the 477-residue chain is Argininosuccinate lyase (477 aa).

It belongs to the lyase 1 family. Argininosuccinate lyase subfamily.

The protein resides in the cytoplasm. The enzyme catalyses 2-(N(omega)-L-arginino)succinate = fumarate + L-arginine. It functions in the pathway amino-acid biosynthesis; L-arginine biosynthesis; L-arginine from L-ornithine and carbamoyl phosphate: step 3/3. The protein is Argininosuccinate lyase of Acinetobacter baumannii (strain AB307-0294).